The primary structure comprises 858 residues: Potassium channel KOR1 (858 aa).

The disordered stretch occupies residues 1–41 (MGRGIGSKRRVEDDDGENMPGRKKKEEEEEEEDDDGEEEYE). Residues 1 to 102 (MGRGIGSKRR…PDNKWYRLWT (102 aa)) are Cytoplasmic-facing. Residues 27 to 41 (EEEEEEDDDGEEEYE) are compositionally biased toward acidic residues. Residues 103–123 (RFILVWAVYSSFFTPLEFGFF) traverse the membrane as a helical segment. Residues 124–130 (RGLPRNL) are Extracellular-facing. The helical transmembrane segment at 131 to 151 (FFLDIAGQIAFLIDIVLRFFV) threads the bilayer. The Cytoplasmic portion of the chain corresponds to 152–174 (AYRDPDTYRMVHNPTSIALRYCK). Residues 175-195 (SSFIFDLLGCFPWDAIYKACG) traverse the membrane as a helical segment. Over 196–201 (SKEEVR) the chain is Extracellular. Residues 202–222 (YLLWIRLTRAMKVTEFFRSME) traverse the membrane as a helical; Voltage-sensor segment. Residues 223–236 (KDIRINYLFTRIVK) are Cytoplasmic-facing. A helical membrane pass occupies residues 237–257 (LIVVELYCTHTAACIFYYLAT). Topologically, residues 258 to 292 (TLPESMEGYTWIGSLQLGDYSYSHFREIDLTKRYM) are extracellular. The segment at residues 293–312 (TSLYFAIVTMATVGYGDIHA) is an intramembrane region (pore-forming). The Extracellular segment spans residues 313–316 (VNVR). Residues 317 to 337 (EMIFIMIYVSFDMILGAYLIG) form a helical membrane-spanning segment. Over 338–858 (NMTALIVKGS…GDDGGTEARQ (521 aa)) the chain is Cytoplasmic. 419-539 (LFKGCSAEFI…RRILSNLSES (121 aa)) serves as a coordination point for a nucleoside 3',5'-cyclic phosphate. ANK repeat units lie at residues 559-592 (KQEA…DPKN), 596-625 (DGRS…DIDL), 629-658 (FGNT…KLSL), 660-689 (NAGS…DPNA), 693-722 (DHRA…SVFA), and 726-756 (WGTT…ELSR). Residues 772 to 858 (RCSVFPHHPW…GDDGGTEARQ (87 aa)) enclose the KHA domain.

It belongs to the potassium channel family. Plant (TC 1.A.1.4) subfamily.

It is found in the membrane. In terms of biological role, probable outward-rectifying potassium channel. The polypeptide is Potassium channel KOR1 (Oryza sativa subsp. japonica (Rice)).